The primary structure comprises 213 residues: Peptide methionine sulfoxide reductase MsrA (213 aa).

Cys53 is a catalytic residue.

The protein belongs to the MsrA Met sulfoxide reductase family.

The enzyme catalyses L-methionyl-[protein] + [thioredoxin]-disulfide + H2O = L-methionyl-(S)-S-oxide-[protein] + [thioredoxin]-dithiol. It carries out the reaction [thioredoxin]-disulfide + L-methionine + H2O = L-methionine (S)-S-oxide + [thioredoxin]-dithiol. Its function is as follows. Has an important function as a repair enzyme for proteins that have been inactivated by oxidation. Catalyzes the reversible oxidation-reduction of methionine sulfoxide in proteins to methionine. The sequence is that of Peptide methionine sulfoxide reductase MsrA from Serratia proteamaculans (strain 568).